An 88-amino-acid polypeptide reads, in one-letter code: Putative septation protein SpoVG (88 aa).

This sequence belongs to the SpoVG family.

Could be involved in septation. In Caldicellulosiruptor saccharolyticus (strain ATCC 43494 / DSM 8903 / Tp8T 6331), this protein is Putative septation protein SpoVG.